Here is a 133-residue protein sequence, read N- to C-terminus: Transcription antitermination protein NusB (133 aa).

The protein belongs to the NusB family.

Its function is as follows. Involved in transcription antitermination. Required for transcription of ribosomal RNA (rRNA) genes. Binds specifically to the boxA antiterminator sequence of the ribosomal RNA (rrn) operons. The sequence is that of Transcription antitermination protein NusB from Clostridium botulinum (strain Alaska E43 / Type E3).